We begin with the raw amino-acid sequence, 272 residues long: 3-methyl-2-oxobutanoate hydroxymethyltransferase (272 aa).

Mg(2+)-binding residues include aspartate 43 and aspartate 82. Residues 43-44 (DS), aspartate 82, and lysine 112 contribute to the 3-methyl-2-oxobutanoate site. Glutamate 114 contributes to the Mg(2+) binding site. The active-site Proton acceptor is glutamate 179.

The protein belongs to the PanB family. As to quaternary structure, homodecamer; pentamer of dimers. Requires Mg(2+) as cofactor.

It localises to the cytoplasm. The catalysed reaction is 3-methyl-2-oxobutanoate + (6R)-5,10-methylene-5,6,7,8-tetrahydrofolate + H2O = 2-dehydropantoate + (6S)-5,6,7,8-tetrahydrofolate. Its pathway is cofactor biosynthesis; (R)-pantothenate biosynthesis; (R)-pantoate from 3-methyl-2-oxobutanoate: step 1/2. Its function is as follows. Catalyzes the reversible reaction in which hydroxymethyl group from 5,10-methylenetetrahydrofolate is transferred onto alpha-ketoisovalerate to form ketopantoate. The chain is 3-methyl-2-oxobutanoate hydroxymethyltransferase from Staphylococcus aureus (strain bovine RF122 / ET3-1).